A 687-amino-acid polypeptide reads, in one-letter code: Pre-mRNA-splicing factor CLF1 (687 aa).

13 HAT repeats span residues 45–77, 79–111, 113–145, 147–178, 180–211, 213–247, 251–283, 300–332, 337–369, 383–416, 451–483, 525–557, and 629–661; these read EYQR…FEIE, HDMR…AELK, KCIN…VEES, NNVE…FEIR, KNWN…FENR, GNTE…AKLV, AHWE…LKAG, TISY…LISE, QIMQ…LWMR, LEEE…FLIR, KEFD…LEEN, QEFE…YQTS, and LDQE…YIFP.

This sequence belongs to the crooked-neck family. As to quaternary structure, belongs to the NTC complex (or PRP19-associated complex), composed of at least CEF1, CLF1, ISY1, NTC20, SNT309, SYF1, SYF2, and PRP19. The NTC complex associates with the spliceosome after the release of the U1 and U4 snRNAs and forms the CWC spliceosome subcomplex (or CEF1-associated complex) reminiscent of a late-stage spliceosome composed also of the U2, U5 and U6 snRNAs and at least BUD13, BUD31, BRR2, CDC40, CUS1, CWC2, CWC15, CWC21, CWC22, CWC23, CWC24, CWC25, CWC27, ECM2, HSH155, IST3, LEA1, MSL1, PRP8, PRP9, PRP11, PRP21, PRP22, PRP45, PRP46, SLU7, SMB1, SMD1, SMD2, SMD3, SMX2, SMX3, SNU114, SPP2, RSE1 and YJU2. Interacts with CEF1, ISY1, MUD2, NTC20, PRP22, PRP40, PRP46, SYF1, SYF2, and the ORC2 subunit of the origin recognition complex.

Its subcellular location is the nucleus. Its function is as follows. Involved in pre-mRNA splicing and cell cycle progression. Required for the spliceosome assembly by promoting the functional integration of the U4/U6.U5 tri-snRNP particle into the U1-, U2-dependent pre-spliceosome. Also recruits PRP19 to the spliceosome, as a component of the NTC complex (or PRP19-associated complex). The association of the NTC complex to the spliceosome mediates conformational rearrangement or stabilizes the structure of the spliceosome after U4 snRNA dissociation, which leads to spliceosome maturation. Required for initiation of the DNA replication by binding the RNA replication origins, probably through its interaction with the origin recognition complex (ORC). This is Pre-mRNA-splicing factor CLF1 (CLF1) from Saccharomyces cerevisiae (strain ATCC 204508 / S288c) (Baker's yeast).